Consider the following 218-residue polypeptide: Protein-L-isoaspartate O-methyltransferase (218 aa).

Residue serine 69 is part of the active site.

It belongs to the methyltransferase superfamily. L-isoaspartyl/D-aspartyl protein methyltransferase family.

Its subcellular location is the cytoplasm. It carries out the reaction [protein]-L-isoaspartate + S-adenosyl-L-methionine = [protein]-L-isoaspartate alpha-methyl ester + S-adenosyl-L-homocysteine. Functionally, catalyzes the methyl esterification of L-isoaspartyl residues in peptides and proteins that result from spontaneous decomposition of normal L-aspartyl and L-asparaginyl residues. It plays a role in the repair and/or degradation of damaged proteins. In Aromatoleum aromaticum (strain DSM 19018 / LMG 30748 / EbN1) (Azoarcus sp. (strain EbN1)), this protein is Protein-L-isoaspartate O-methyltransferase.